The following is a 329-amino-acid chain: Microtubule-associated protein RP/EB family member 1C (329 aa).

The region spanning 13–115 (FVGRSEILAW…FMQWMKKYCD (103 aa)) is the Calponin-homology (CH) domain. Over residues 130–141 (REASKGGKEATK) the composition is skewed to basic and acidic residues. Residues 130-203 (REASKGGKEA…SAKQSKPVPA (74 aa)) are disordered. The segment covering 174–185 (SNNTGTHHSSTG) has biased composition (low complexity). In terms of domain architecture, EB1 C-terminal spans 193–263 (PSAKQSKPVP…LYAADGEDVG (71 aa)). Residues 289 to 311 (KRKLIVNLDVDVAAITTLSPRQR) are required for nuclear localization.

The protein belongs to the MAPRE family. Homodimer. In terms of tissue distribution, highly expressed in the root and shoot meristems, in guard cells of leaf stomata, pollen grains and pollen tubes.

The protein resides in the nucleus. The protein localises to the cytoplasm. It localises to the cytoskeleton. It is found in the spindle. Its subcellular location is the phragmoplast. In terms of biological role, plant-specific EB1 subtype that functions preferentially at early stages of plant mitosis by regulating spindle positioning and chromosome segregation. Accumulates in the prophase nucleus and is required to maintain spindle bipolarity during premetaphase and/or metaphase and for efficient segregation of chromosomes at anaphase. May play a role in the dynamics of microtubule network in elongating pollen tubes. The chain is Microtubule-associated protein RP/EB family member 1C (EB1C) from Arabidopsis thaliana (Mouse-ear cress).